The primary structure comprises 137 residues: Large ribosomal subunit protein bL17 (137 aa).

Belongs to the bacterial ribosomal protein bL17 family. As to quaternary structure, part of the 50S ribosomal subunit. Contacts protein L32.

The chain is Large ribosomal subunit protein bL17 from Rickettsia typhi (strain ATCC VR-144 / Wilmington).